Consider the following 298-residue polypeptide: Aquaporin NIP2-1 (298 aa).

N-linked (GlcNAc...) asparagine glycans are attached at residues asparagine 4, asparagine 13, and asparagine 26. Transmembrane regions (helical) follow at residues 51 to 71 (VVSE…AAGI) and 85 to 105 (SIAG…ISGA). The short motif at 108-110 (NPA) is the NPA 1 element. Helical transmembrane passes span 124–144 (IQVP…SFVL), 166–186 (SLVV…AVAT), and 194–214 (LAGL…GAIS). Residues 219–221 (NPA) carry the NPA 2 motif. Residues 237–257 (WIYFLGPVMGTLSGAWTYTFI) form a helical membrane-spanning segment.

This sequence belongs to the MIP/aquaporin (TC 1.A.8) family. NIP (TC 1.A.8.12) subfamily. As to expression, mainly expressed in the roots. In roots, it localizes in the main and lateral roots, but not in root hairs. Within a root, it localizes on the plasma membrane of the distal side of both exodermis and endodermis, where casparian strips exist (at protein level). Expressed low levels in leaves and anthers.

The protein localises to the cell membrane. In terms of biological role, silicon influx transporter responsible for silicon transport from the external solution to the root cells. Is coupled with the silicon efflux transporter LSI2 in both exodermal and endodermal root cells for an efficient silicon transport across the cells into the stele. Silicon is beneficial to plant growth and helps plants to overcome abiotic and biotic stresses by preventing lodging (falling over) and increasing resistance to pests and diseases, as well as other stresses. Is coupled with LSI2 transporter in roots for efficient uptake of arsenite, which is further dispatched in shoots and grains. Mediates uptake of methylated arsenic species in roots. The chain is Aquaporin NIP2-1 from Oryza sativa subsp. japonica (Rice).